A 274-amino-acid chain; its full sequence is Undecaprenyl-diphosphatase (274 aa).

7 consecutive transmembrane segments (helical) span residues 40-60 (PGAA…LMFF), 90-110 (WFII…KDVI), 114-134 (FRSL…LGVA), 147-167 (ISLR…IPGV), 190-210 (YAFL…LKDI), 221-241 (PTIV…AWLL), and 252-272 (FVLY…TGVI).

It belongs to the UppP family.

It localises to the cell membrane. The catalysed reaction is di-trans,octa-cis-undecaprenyl diphosphate + H2O = di-trans,octa-cis-undecaprenyl phosphate + phosphate + H(+). Functionally, catalyzes the dephosphorylation of undecaprenyl diphosphate (UPP). Confers resistance to bacitracin. This Nocardioides sp. (strain ATCC BAA-499 / JS614) protein is Undecaprenyl-diphosphatase.